Here is a 284-residue protein sequence, read N- to C-terminus: Tropomyosin (284 aa).

Disordered regions lie at residues 1–27 and 99–131; these read MDAIKKKMQAMKVDRENAQDLAEQMEQ and YERSEEKLNSTTEKLEEASKAADESERNRKVLE. The stretch at 1–273 forms a coiled coil; that stretch reads MDAIKKKMQA…KERYKAISDD (273 aa). The span at 102–131 shows a compositional bias: basic and acidic residues; that stretch reads SEEKLNSTTEKLEEASKAADESERNRKVLE.

This sequence belongs to the tropomyosin family. Homodimer.

Its function is as follows. Tropomyosin, in association with the troponin complex, plays a central role in the calcium dependent regulation of muscle contraction. In Mimachlamys nobilis (Noble scallop), this protein is Tropomyosin.